Consider the following 224-residue polypeptide: tRNA (guanine-N(7)-)-methyltransferase (224 aa).

S-adenosyl-L-methionine-binding residues include Glu54, Glu79, and Asp129. Residue Asp129 is part of the active site. Residues Lys133 and Asp165 each contribute to the substrate site.

Belongs to the class I-like SAM-binding methyltransferase superfamily. TrmB family.

The catalysed reaction is guanosine(46) in tRNA + S-adenosyl-L-methionine = N(7)-methylguanosine(46) in tRNA + S-adenosyl-L-homocysteine. It functions in the pathway tRNA modification; N(7)-methylguanine-tRNA biosynthesis. Catalyzes the formation of N(7)-methylguanine at position 46 (m7G46) in tRNA. The sequence is that of tRNA (guanine-N(7)-)-methyltransferase from Chlamydia pneumoniae (Chlamydophila pneumoniae).